We begin with the raw amino-acid sequence, 161 residues long: Copper transporter 1 (161 aa).

Transmembrane regions (helical) follow at residues 55–75 and 109–129; these read GGMY…VEFL and VAYL…LVAV.

This sequence belongs to the copper transporter (Ctr) (TC 1.A.56) family. SLC31A subfamily. In terms of assembly, self-interacts. Interacts with SWEET11 and COPT2.

The protein resides in the cell membrane. Involved in the transport of copper, in cooperation with SWEET11 and COPT2. Contributes to the removal of copper (Cu) from xylem, and thus to the sensitivity toward bacterial pathogens such as X.oryzae pv. oryzae (Xoo). This chain is Copper transporter 1 (COPT1), found in Oryza sativa subsp. japonica (Rice).